Consider the following 269-residue polypeptide: Serine/arginine-rich splicing factor 5 (269 aa).

The RRM 1 domain maps to 4–74 (CRVFIGRLNP…ERVTIEHARA (71 aa)). The interval 73–105 (RARSRGGRGRGRYSDRFSSRRPRNDRRNAPPVR) is disordered. Positions 74 to 83 (ARSRGGRGRG) are enriched in basic residues. A Phosphoserine modification is found at serine 86. In terms of domain architecture, RRM 2 spans 108–189 (NRLIVENLSS…SKRHRSRSRS (82 aa)). Lysine 167 carries the N6-acetyllysine modification. Positions 174 to 269 (IKLIEGSKRH…SRSRSVDSGN (96 aa)) are disordered. Residues 181-226 (KRHRSRSRSRSRTRSSSRSRSRSRSRRSKSYSRSRSRSRSRSKSRS) are compositionally biased toward basic residues. A phosphoserine mark is found at serine 224, serine 226, serine 230, serine 247, and serine 250. The span at 239 to 251 (RGSSSRSKSPASV) shows a compositional bias: low complexity.

This sequence belongs to the splicing factor SR family. As to quaternary structure, found in a pre-mRNA splicing complex with SRSF4/SFRS4, SRSF5/SFRS5, SNRNP70, SNRPA1, SRRM1 and SRRM2. Interacts with RBMY; the interaction inhibits SRSF5 pre-mRNA splicing. Interacts (via RS domain) with PHF5A (via N-terminus). Extensively phosphorylated on serine residues in the RS domain.

It localises to the nucleus. In terms of biological role, may be required for progression through G1 and entry into S phase of cell growth. May play a regulatory role in pre-mRNA splicing. Autoregulates its own expression. Plays a role in constitutive splicing and can modulate the selection of alternative splice sites. The chain is Serine/arginine-rich splicing factor 5 (Srsf5) from Mus musculus (Mouse).